The following is a 331-amino-acid chain: NADH-cytochrome b5 reductase 2 (331 aa).

Residues 36 to 56 (VGILIASAVGMAGFGTYFMFG) form a helical membrane-spanning segment. The FAD-binding FR-type domain maps to 80-185 (KGFVSLQLDD…KGPLPKYEWS (106 aa)). FAD is bound at residue 188–223 (KHPHVAMIAGGTGITPMYQIMRAIFKNPADKTKVTL).

This sequence belongs to the flavoprotein pyridine nucleotide cytochrome reductase family. FAD is required as a cofactor.

It localises to the mitochondrion outer membrane. It catalyses the reaction 2 Fe(III)-[cytochrome b5] + NADH = 2 Fe(II)-[cytochrome b5] + NAD(+) + H(+). Its function is as follows. May mediate the reduction of outer membrane cytochrome b5. The chain is NADH-cytochrome b5 reductase 2 (MCR1) from Pyricularia oryzae (strain 70-15 / ATCC MYA-4617 / FGSC 8958) (Rice blast fungus).